A 119-amino-acid chain; its full sequence is Ribonuclease P protein component (119 aa).

This sequence belongs to the RnpA family. As to quaternary structure, consists of a catalytic RNA component (M1 or rnpB) and a protein subunit.

The enzyme catalyses Endonucleolytic cleavage of RNA, removing 5'-extranucleotides from tRNA precursor.. RNaseP catalyzes the removal of the 5'-leader sequence from pre-tRNA to produce the mature 5'-terminus. It can also cleave other RNA substrates such as 4.5S RNA. The protein component plays an auxiliary but essential role in vivo by binding to the 5'-leader sequence and broadening the substrate specificity of the ribozyme. The protein is Ribonuclease P protein component of Klebsiella pneumoniae (strain 342).